A 139-amino-acid polypeptide reads, in one-letter code: Probable transcription termination protein NusA (139 aa).

Positions 97-139 (STVAYAEVDRADTGVAIGRDGETIETARRLAERQFDIDDIELA) constitute a KH domain.

It belongs to the NusA family.

Its subcellular location is the cytoplasm. Its function is as follows. Participates in transcription termination. The sequence is that of Probable transcription termination protein NusA from Halococcus morrhuae (Micrococcus morrhuae).